A 786-amino-acid chain; its full sequence is Progesterone receptor (786 aa).

The span at 1–10 shows a compositional bias: basic and acidic residues; the sequence is MTEVKSKETR. Disordered regions lie at residues 1–95, 110–212, and 252–279; these read MTEV…SKDC, AAPW…ASPA, and SAFGPRSSPSVPAADLAEYGYPPPDGKE. The tract at residues 1–420 is modulating, Pro-Rich; it reads MTEVKSKETR…YSFESLPQKI (420 aa). Residue lysine 7 forms a Glycyl lysine isopeptide (Lys-Gly) (interchain with G-Cter in SUMO) linkage. The segment covering 48–79 has biased composition (acidic residues); it reads DEEEEEEENEEEEEEEEPQQREEEEEEEEEDR. A compositionally biased stretch (pro residues) spans 143-154; that stretch reads APGPSQPRPGAP. The segment covering 186 to 197 has biased composition (basic and acidic residues); that stretch reads AEERGFPERDAG. Over residues 203–212 the composition is skewed to low complexity; that stretch reads LAPAAAASPA. 2 positions are modified to phosphoserine: serine 210 and serine 259. Residue lysine 294 forms a Glycyl lysine isopeptide (Lys-Gly) (interchain with G-Cter in SUMO); alternate linkage. A Glycyl lysine isopeptide (Lys-Gly) (interchain with G-Cter in ubiquitin); alternate cross-link involves residue lysine 294. Lysine 385 participates in a covalent cross-link: Glycyl lysine isopeptide (Lys-Gly) (interchain with G-Cter in SUMO). 2 consecutive NR C4-type zinc fingers follow at residues 421–441 and 457–481; these read CLICGDEASGCHYGVLTCGSC and CAGRNDCIVDKIRRKNCPACRLRKC. The nuclear receptor DNA-binding region spans 421 to 486; the sequence is CLICGDEASG…RLRKCCQAGM (66 aa). Serine 529 is subject to Phosphoserine. The NR LBD domain maps to 532 to 766; it reads QEIPFVPPMI…EFPEMMSEVI (235 aa).

The protein belongs to the nuclear hormone receptor family. NR3 subfamily. Post-translationally, phosphorylation of Ser-529 is sharply increased upon progesterone treatment, whereas phosphorylation of Ser-210 and Ser-259 is modestly induced by progesterone. In terms of processing, ubiquitinated. Ubiquitination is increased by progesterone and represses sumoylation at the same site. Sumoylation is hormone-dependent and represses transcriptional activity. Sumoylation on all three sites is enhanced by PIAS3. Desumoylated by SENP1. Sumoylation on Lys-385, the main site of sumoylation, is repressed by ubiquitination on the same site. As to expression, oviduct and bursa of Fabricius.

The protein resides in the nucleus. It localises to the cytoplasm. In terms of biological role, the steroid hormones and their receptors are involved in the regulation of eukaryotic gene expression and affect cellular proliferation and differentiation in target tissues. The polypeptide is Progesterone receptor (PGR) (Gallus gallus (Chicken)).